Here is a 565-residue protein sequence, read N- to C-terminus: Proline--tRNA ligase (565 aa).

Belongs to the class-II aminoacyl-tRNA synthetase family. ProS type 1 subfamily. As to quaternary structure, homodimer.

The protein resides in the cytoplasm. The catalysed reaction is tRNA(Pro) + L-proline + ATP = L-prolyl-tRNA(Pro) + AMP + diphosphate. In terms of biological role, catalyzes the attachment of proline to tRNA(Pro) in a two-step reaction: proline is first activated by ATP to form Pro-AMP and then transferred to the acceptor end of tRNA(Pro). As ProRS can inadvertently accommodate and process non-cognate amino acids such as alanine and cysteine, to avoid such errors it has two additional distinct editing activities against alanine. One activity is designated as 'pretransfer' editing and involves the tRNA(Pro)-independent hydrolysis of activated Ala-AMP. The other activity is designated 'posttransfer' editing and involves deacylation of mischarged Ala-tRNA(Pro). The misacylated Cys-tRNA(Pro) is not edited by ProRS. In Bacillus pumilus (strain SAFR-032), this protein is Proline--tRNA ligase.